The following is a 275-amino-acid chain: Myoblast determination protein 1 homolog (275 aa).

One can recognise a bHLH domain in the interval 84 to 135 (DRRKAATMRERRRLSKVNDAFETLKRCTSTNPNQRLPKVEILRNAISYIESL). Residues 234–275 (EGHEESPCSPHEGSVLSDTGTTAPSPTSCPQQQAQETIYQVL) are disordered. Positions 249 to 275 (LSDTGTTAPSPTSCPQQQAQETIYQVL) are enriched in polar residues.

As to quaternary structure, efficient DNA binding requires dimerization with another bHLH protein. In terms of tissue distribution, from mid-gastrula to just before somite formation, expressed in cells adjacent to axial mesoderm. Subsequently, during the anterior-to-posterior wave of somite formation and maturation, expressed within particular regions of each somite. Expressed in both muscle and non-muscle cells.

The protein resides in the nucleus. In terms of biological role, may act as a transcriptional activator that promotes transcription of muscle-specific target genes and plays a role in muscle differentiation. The chain is Myoblast determination protein 1 homolog (myod1) from Danio rerio (Zebrafish).